Reading from the N-terminus, the 302-residue chain is Homoserine O-acetyltransferase (302 aa).

C142 functions as the Acyl-thioester intermediate in the catalytic mechanism. Residues K163 and S192 each contribute to the substrate site. H235 acts as the Proton acceptor in catalysis. E237 is a catalytic residue. Residue R249 participates in substrate binding.

Belongs to the MetA family.

The protein localises to the cytoplasm. It carries out the reaction L-homoserine + acetyl-CoA = O-acetyl-L-homoserine + CoA. It functions in the pathway amino-acid biosynthesis; L-methionine biosynthesis via de novo pathway; O-acetyl-L-homoserine from L-homoserine: step 1/1. Functionally, transfers an acetyl group from acetyl-CoA to L-homoserine, forming acetyl-L-homoserine. In Bacillus pumilus (strain SAFR-032), this protein is Homoserine O-acetyltransferase.